The sequence spans 256 residues: MYRYKITFAYDGTNFSGFQIQPNKRTVEQTLKNAVNKIAKHPTPAIPVIGSGRTDAGVHALNQVAHFDIPYHLSNESMRKALNSILPLDILIKKAELVDNDFHARYSAHRKTYRYRVDQGEFVNPFKRNYTSHFKYPLNLEKMRKAADDLVGTHDFTSFVASGSQAKSNVRTIENITIKRDEVRNEVVFDFTGNGFLYNQVRIMVAFLLEIGSNQRPVDDVSRVLKAKDRTLARMTAPASGLYLVNVDYGTNDEKD.

Asp-55 serves as the catalytic Nucleophile. Tyr-113 contributes to the substrate binding site.

The protein belongs to the tRNA pseudouridine synthase TruA family. Homodimer.

The enzyme catalyses uridine(38/39/40) in tRNA = pseudouridine(38/39/40) in tRNA. Formation of pseudouridine at positions 38, 39 and 40 in the anticodon stem and loop of transfer RNAs. This Limosilactobacillus reuteri (strain DSM 20016) (Lactobacillus reuteri) protein is tRNA pseudouridine synthase A.